Here is a 348-residue protein sequence, read N- to C-terminus: S-adenosylmethionine:tRNA ribosyltransferase-isomerase (348 aa).

It belongs to the QueA family. Monomer.

Its subcellular location is the cytoplasm. The catalysed reaction is 7-aminomethyl-7-carbaguanosine(34) in tRNA + S-adenosyl-L-methionine = epoxyqueuosine(34) in tRNA + adenine + L-methionine + 2 H(+). Its pathway is tRNA modification; tRNA-queuosine biosynthesis. Transfers and isomerizes the ribose moiety from AdoMet to the 7-aminomethyl group of 7-deazaguanine (preQ1-tRNA) to give epoxyqueuosine (oQ-tRNA). The chain is S-adenosylmethionine:tRNA ribosyltransferase-isomerase from Amoebophilus asiaticus (strain 5a2).